Reading from the N-terminus, the 393-residue chain is Probable WRKY transcription factor 25 (393 aa).

Residues 160 to 224 (MVSRNSNDGY…YKGGHNHPKP (65 aa)) constitute a DNA-binding region (WRKY 1). 4 residues coordinate Zn(2+): Cys-191, Cys-196, His-219, and His-221. Disordered stretches follow at residues 217–242 (GGHN…VNGR) and 277–303 (SEYG…DEGM). Residues 229-240 (RPSQSSLPSSVN) show a composition bias toward polar residues. Positions 289–298 (PEMKRMKREG) are enriched in basic and acidic residues. A DNA-binding region (WRKY 2) is located at residues 322-387 (SDIDVLIDGF…YEGRHNHDIP (66 aa)). Zn(2+)-binding residues include Cys-353, Cys-358, His-382, and His-384.

It belongs to the WRKY group I family. As to quaternary structure, interacts with MKS1. Interacts with SIB1. Interacts with VQ10 and CAMBP25/VQ15. Post-translationally, phosphorylated by MPK4. Highly expressed in roots and at lower levels in leaves, stems and seeds.

It is found in the nucleus. Its function is as follows. Transcription factor. Interacts specifically with the W box (5'-(T)TGAC[CT]-3'), a frequently occurring elicitor-responsive cis-acting element. Functions with WRKY33 as positive regulator of salt stress response and abscisic acid (ABA) signaling. Plays a partial role in heat stress tolerance. Functions with WRKY26 and WRKY33 as positive regulator of plant thermotolerance by partially participating in ethylene-response signal transduction pathway. In Arabidopsis thaliana (Mouse-ear cress), this protein is Probable WRKY transcription factor 25 (WRKY25).